A 211-amino-acid polypeptide reads, in one-letter code: Transmembrane protein 247 (211 aa).

Basic and acidic residues-rich tracts occupy residues 1–10 (MAMEDREVME) and 31–45 (PEGK…EVPK). Residues 1-90 (MAMEDREVME…AGDGPGLESV (90 aa)) are disordered. Residues 63–73 (PGPPRSLPPKS) are compositionally biased toward pro residues. Positions 119–148 (KYLHQENERQRQHEEVMEQLQQQQQQQQAL) form a coiled coil. Transmembrane regions (helical) follow at residues 159-179 (LLLP…IHII) and 186-206 (VFFL…LCLI).

It localises to the membrane. The sequence is that of Transmembrane protein 247 (Tmem247) from Mus musculus (Mouse).